The following is a 209-amino-acid chain: Imidazoleglycerol-phosphate dehydratase (209 aa).

The protein belongs to the imidazoleglycerol-phosphate dehydratase family.

The protein resides in the cytoplasm. It catalyses the reaction D-erythro-1-(imidazol-4-yl)glycerol 3-phosphate = 3-(imidazol-4-yl)-2-oxopropyl phosphate + H2O. It participates in amino-acid biosynthesis; L-histidine biosynthesis; L-histidine from 5-phospho-alpha-D-ribose 1-diphosphate: step 6/9. This chain is Imidazoleglycerol-phosphate dehydratase, found in Prochlorococcus marinus (strain MIT 9313).